The primary structure comprises 1173 residues: Thrombospondin-1 (1173 aa).

The N-terminal stretch at 1–18 (MKGIFLLLMLVMPQTHQA) is a signal peptide. In terms of domain architecture, Laminin G-like spans 22–224 (GNDDNSVFDL…LQNVRFVFGT (203 aa)). The heparin-binding stretch occupies residues 50-98 (HLVKGPDPSSPAYRIEDADLIPPLPEDKFQDLLDAIRADRGFILLATLR). N-linked (GlcNAc...) asparagine glycosylation is found at Asn155 and Asn158. A disulfide bridge connects residues Cys174 and Cys235. 2 N-linked (GlcNAc...) asparagine glycosylation sites follow: Asn250 and Asn363. Positions 319–376 (GVCLHNGVLHKNRDEWTVDSCTECTCQNSATICRKVSCPLMPCTNATIPDGECCPRCW) constitute a VWFC domain. 3 consecutive TSP type-1 domains span residues 382-432 (DDDW…QDCD), 438-493 (DGGW…DPCP), and 495-550 (NGQW…QDCP). 18 cysteine pairs are disulfide-bonded: Cys394–Cys426, Cys398–Cys431, Cys409–Cys416, Cys450–Cys487, Cys454–Cys492, Cys465–Cys477, Cys507–Cys544, Cys511–Cys549, Cys522–Cys534, Cys554–Cys565, Cys559–Cys575, Cys578–Cys589, Cys595–Cys611, Cys602–Cys620, Cys623–Cys647, Cys653–Cys666, Cys660–Cys679, and Cys681–Cys692. An EGF-like 1 domain is found at 550-590 (PIDGCLSNPCFAGVKCTSFIDGSWKCGSCPPGYRGNGITCK). The EGF-like 2 domain occupies 649–693 (PRNPCADGTHDCHKNARCIYLGHYSDPMFRCECRPGYAGNGIICG). TSP type-3 repeat units lie at residues 694-729 (EDTDLDGWPNENLTCVDNATYHCLKDNCPNLPNSGQ), 730-765 (EDYDKDGMGDACDKDDDNDGILDDRDNCQFVYNPAQ), 766-788 (YDYDRDDVGDRCDNCPYNHNPDQ), 789-824 (ADTDRNGEGDACSVDIDGDGILNERDNCAYVYNVDQ), 825-847 (KDTDKDGVGDQCDNCPLEHNPEQ), 848-885 (TDSDSDLIGDKCDNNQDIDEDGHQNNLDNCPYIPNANQ), 886-921 (ADHDKDGKGDACDHDDDNDGVPDDKDNCRLVPNPDQ), and 922-957 (TDTNGDGRGDACQYDFDDDSIPDAEDVCPENVEIST). Asn705 and Asn711 each carry an N-linked (GlcNAc...) asparagine glycan. Intrachain disulfides connect Cys708–Cys716, Cys721–Cys741, Cys757–Cys777, Cys780–Cys800, Cys816–Cys836, Cys839–Cys859, Cys877–Cys897, Cys913–Cys933, and Cys949–Cys1170. Residues 838-935 (NCPLEHNPEQ…GDGRGDACQY (98 aa)) are disordered. A compositionally biased stretch (basic and acidic residues) spans 886–897 (ADHDKDGKGDAC). The Cell attachment site signature appears at 929-931 (RGD). The region spanning 961–1173 (RKFQMVPLDP…SDLKYECRDS (213 aa)) is the TSP C-terminal domain. Asn1070 carries an N-linked (GlcNAc...) asparagine glycan.

It belongs to the thrombospondin family. In terms of assembly, homotrimer; disulfide-linked.

Its subcellular location is the secreted. It is found in the cell surface. It localises to the extracellular space. The protein localises to the extracellular matrix. The protein resides in the endoplasmic reticulum. Its subcellular location is the sarcoplasmic reticulum. Its function is as follows. Adhesive glycoprotein that mediates cell-to-cell and cell-to-matrix interactions. Can bind to fibrinogen, fibronectin, laminin, type V collagen and integrins alpha-V/beta-1, alpha-V/beta-3 and alpha-IIb/beta-3. May play a role in ER stress response. This Xenopus laevis (African clawed frog) protein is Thrombospondin-1 (thbs1).